The primary structure comprises 213 residues: Adenylate kinase (213 aa).

10 to 15 (GSGKGT) is an ATP binding site. The NMP stretch occupies residues 30-59 (STGDMLRTTVNKESVLGKNIQAIIKLGNLV). AMP is bound by residues Thr-31, Arg-36, 57–59 (NLV), 85–88 (GFPR), and Gln-92. Residues 122 to 159 (GRMVHEPSGRIYHVTFNPPKQKGKDDITGENLIIRQDD) form an LID region. ATP contacts are provided by residues Arg-123 and 132 to 133 (IY). AMP-binding residues include Arg-156 and Arg-167. Cys-199 contributes to the ATP binding site.

This sequence belongs to the adenylate kinase family. In terms of assembly, monomer.

The protein localises to the cytoplasm. It catalyses the reaction AMP + ATP = 2 ADP. The protein operates within purine metabolism; AMP biosynthesis via salvage pathway; AMP from ADP: step 1/1. Functionally, catalyzes the reversible transfer of the terminal phosphate group between ATP and AMP. Plays an important role in cellular energy homeostasis and in adenine nucleotide metabolism. The polypeptide is Adenylate kinase (Baumannia cicadellinicola subsp. Homalodisca coagulata).